Reading from the N-terminus, the 231-residue chain is 2-C-methyl-D-erythritol 4-phosphate cytidylyltransferase (231 aa).

This sequence belongs to the IspD/TarI cytidylyltransferase family. IspD subfamily.

The catalysed reaction is 2-C-methyl-D-erythritol 4-phosphate + CTP + H(+) = 4-CDP-2-C-methyl-D-erythritol + diphosphate. Its pathway is isoprenoid biosynthesis; isopentenyl diphosphate biosynthesis via DXP pathway; isopentenyl diphosphate from 1-deoxy-D-xylulose 5-phosphate: step 2/6. Catalyzes the formation of 4-diphosphocytidyl-2-C-methyl-D-erythritol from CTP and 2-C-methyl-D-erythritol 4-phosphate (MEP). In Xylella fastidiosa (strain 9a5c), this protein is 2-C-methyl-D-erythritol 4-phosphate cytidylyltransferase.